Consider the following 421-residue polypeptide: UDP-N-acetylglucosamine 1-carboxyvinyltransferase (421 aa).

Residue 23-24 participates in phosphoenolpyruvate binding; it reads KN. Arg-92 contacts UDP-N-acetyl-alpha-D-glucosamine. Cys-116 serves as the catalytic Proton donor. Position 116 is a 2-(S-cysteinyl)pyruvic acid O-phosphothioketal (Cys-116). UDP-N-acetyl-alpha-D-glucosamine is bound by residues 121–125, 161–164, Asp-306, and Ile-328; these read RPVDL and KVSV.

The protein belongs to the EPSP synthase family. MurA subfamily.

The protein resides in the cytoplasm. It catalyses the reaction phosphoenolpyruvate + UDP-N-acetyl-alpha-D-glucosamine = UDP-N-acetyl-3-O-(1-carboxyvinyl)-alpha-D-glucosamine + phosphate. The protein operates within cell wall biogenesis; peptidoglycan biosynthesis. In terms of biological role, cell wall formation. Adds enolpyruvyl to UDP-N-acetylglucosamine. This Vibrio vulnificus (strain CMCP6) protein is UDP-N-acetylglucosamine 1-carboxyvinyltransferase.